The sequence spans 289 residues: Palmitoyl-protein thioesterase 3 (289 aa).

The N-terminal stretch at 1-20 (MRILSSLILLIALAIALVSA) is a signal peptide. The active site involves Ser-97. 2 N-linked (GlcNAc...) asparagine glycosylation sites follow: Asn-189 and Asn-195. Residues Asp-210 and His-266 contribute to the active site. Asn-281 carries N-linked (GlcNAc...) asparagine glycosylation.

This sequence belongs to the palmitoyl-protein thioesterase family.

It is found in the lysosome. It catalyses the reaction S-hexadecanoyl-L-cysteinyl-[protein] + H2O = L-cysteinyl-[protein] + hexadecanoate + H(+). In terms of biological role, removes thioester-linked fatty acyl groups such as palmitate from modified cysteine residues in proteins or peptides during lysosomal degradation. In Dictyostelium discoideum (Social amoeba), this protein is Palmitoyl-protein thioesterase 3 (ppt3).